A 324-amino-acid chain; its full sequence is Large ribosomal subunit protein uL3m (324 aa).

Residues 1–41 constitute a mitochondrion transit peptide; that stretch reads MAAVPRGLLSRINQFLSIRSITPSSSESLPHCSSFFLIRRF. The interval 206-229 is disordered; sequence PASHGASLSHRSGGSTGQRDAPGK.

It belongs to the universal ribosomal protein uL3 family. In terms of assembly, part of the 50S ribosomal subunit.

Its subcellular location is the mitochondrion. In terms of biological role, one of the primary rRNA binding proteins, it binds directly near the 3'-end of the 23S rRNA, where it nucleates assembly of the 50S subunit. The polypeptide is Large ribosomal subunit protein uL3m (Arabidopsis thaliana (Mouse-ear cress)).